Reading from the N-terminus, the 276-residue chain is Sulfur carrier protein FdhD (276 aa).

Cysteine 122 serves as the catalytic Cysteine persulfide intermediate. Residue 259 to 264 coordinates Mo-bis(molybdopterin guanine dinucleotide); it reads FCRRGR.

It belongs to the FdhD family.

The protein localises to the cytoplasm. In terms of biological role, required for formate dehydrogenase (FDH) activity. Acts as a sulfur carrier protein that transfers sulfur from IscS to the molybdenum cofactor prior to its insertion into FDH. The polypeptide is Sulfur carrier protein FdhD (Proteus mirabilis (strain HI4320)).